Here is a 257-residue protein sequence, read N- to C-terminus: Transcription factor GHD7 (257 aa).

Ser-68 is subject to Phosphoserine; by CK1. Residues 190–232 form the CCT domain; it reads REAKLMRYKEKRKKRCYEKQIRYASRKAYAEMRPRVRGRFAKE. The Nuclear localization signal motif lies at 198 to 204; sequence KEKRKKR. Residues 226–245 are disordered; that stretch reads RGRFAKEPDQEAVAPPSTYV.

In terms of assembly, interacts with HD16/EL1. In terms of processing, phosphorylated at Ser-68 by HD16/EL1, a casein kinase 1. As to expression, expressed in the apical meristem, developing leaves, leaf sheaths of young seedling, root meristem, epidermal layer of developing stems and branch-primordia of developing panicles.

Its subcellular location is the nucleus. Its function is as follows. Probable transcription factor involved in the regulation of flowering time under long day (LD) conditions. Plays a major role as repressor of flowering. Controls flowering time by negatively regulating the expression of EHD1 and HD3A. The sequence is that of Transcription factor GHD7 from Oryza sativa subsp. japonica (Rice).